The primary structure comprises 58 residues: Ferredoxin-2 (58 aa).

4Fe-4S ferredoxin-type domains lie at 2 to 27 (IEVN…MNEE) and 30 to 58 (KAVV…IVRS). [3Fe-4S] cluster is bound at residue cysteine 8. At cysteine 11 the chain carries Cysteine methyl disulfide. Residue cysteine 14 participates in [3Fe-4S] cluster binding. A disulfide bridge links cysteine 18 with cysteine 42. [3Fe-4S] cluster is bound at residue cysteine 50.

As to quaternary structure, homodimer (ferredoxin I) or homotetramer (ferredoxin II). The cofactor is [3Fe-4S] cluster. [4Fe-4S] cluster is required as a cofactor.

Its function is as follows. Ferredoxins are iron-sulfur proteins that transfer electrons in a wide variety of metabolic reactions. The chain is Ferredoxin-2 from Megalodesulfovibrio gigas (Desulfovibrio gigas).